Consider the following 403-residue polypeptide: Glucose-signaling factor 2 (403 aa).

Residues 1 to 177 lie on the Lumenal side of the membrane; the sequence is MEIYIRLNAD…QEVQANYSSL (177 aa). 2 N-linked (GlcNAc...) asparagine glycosylation sites follow: asparagine 89 and asparagine 173. Residues 178–198 traverse the membrane as a helical; Signal-anchor for type II membrane protein segment; that stretch reads VAQWLFFVMHIFKVGIITLFL. Residues 199–403 lie on the Cytoplasmic side of the membrane; sequence KLGIANPISF…IKKNDLKKSN (205 aa). Residues 330-388 adopt a coiled-coil conformation; it reads ELENNLKKILEEYDGDIGKMNAEIRRFRRFGIYEPDEKLASLVKLRREIADEKEKASNN.

Its subcellular location is the endoplasmic reticulum membrane. Functionally, may be involved in the secretion of hexose transporters from the endoplasmic reticulum. Involved in secretion of GAL2 and HXT1. This chain is Glucose-signaling factor 2 (GSF2), found in Saccharomyces cerevisiae (strain ATCC 204508 / S288c) (Baker's yeast).